The primary structure comprises 250 residues: MSKENKTTDFGFTQVPWEEKQKKVAGVFHSVAAKYDLMNDLMSFGIHRIWKKQTIAKSGVRKGDNVLDLAGGTGDLAYKFCQMVGQQGKVILSDINSSMLEVGKEKLTNKGCVGNIEYVQANAECLPFPDNYFDCITISFGLRNVTDKEKALASMCRVLKPGGRLLVLEFSKPIIPLLSKVYDEYSFKALPFLGKIITQDAESYKYLAESIRKHPDQQTLKQMMYDAGFDNVEYQNMTGGIVALHIGYKY.

Residues Thr73, Asp94, 122–123 (NA), and Ser139 contribute to the S-adenosyl-L-methionine site.

This sequence belongs to the class I-like SAM-binding methyltransferase superfamily. MenG/UbiE family.

The enzyme catalyses a 2-demethylmenaquinol + S-adenosyl-L-methionine = a menaquinol + S-adenosyl-L-homocysteine + H(+). It carries out the reaction a 2-methoxy-6-(all-trans-polyprenyl)benzene-1,4-diol + S-adenosyl-L-methionine = a 5-methoxy-2-methyl-3-(all-trans-polyprenyl)benzene-1,4-diol + S-adenosyl-L-homocysteine + H(+). Its pathway is quinol/quinone metabolism; menaquinone biosynthesis; menaquinol from 1,4-dihydroxy-2-naphthoate: step 2/2. It participates in cofactor biosynthesis; ubiquinone biosynthesis. In terms of biological role, methyltransferase required for the conversion of demethylmenaquinol (DMKH2) to menaquinol (MKH2) and the conversion of 2-polyprenyl-6-methoxy-1,4-benzoquinol (DDMQH2) to 2-polyprenyl-3-methyl-6-methoxy-1,4-benzoquinol (DMQH2). This chain is Ubiquinone/menaquinone biosynthesis C-methyltransferase UbiE, found in Francisella tularensis subsp. novicida (strain U112).